The following is a 198-amino-acid chain: Glycerol-3-phosphate acyltransferase (198 aa).

5 helical membrane-spanning segments follow: residues 2-22, 53-75, 79-98, 113-133, and 147-167; these read FITY…FALV, AGFI…PLIF, IHPL…PIFA, LLCY…TLLF, and IAAV…AMCL.

Belongs to the PlsY family. As to quaternary structure, probably interacts with PlsX.

The protein localises to the cell membrane. It catalyses the reaction an acyl phosphate + sn-glycerol 3-phosphate = a 1-acyl-sn-glycero-3-phosphate + phosphate. It functions in the pathway lipid metabolism; phospholipid metabolism. Catalyzes the transfer of an acyl group from acyl-phosphate (acyl-PO(4)) to glycerol-3-phosphate (G3P) to form lysophosphatidic acid (LPA). This enzyme utilizes acyl-phosphate as fatty acyl donor, but not acyl-CoA or acyl-ACP. The polypeptide is Glycerol-3-phosphate acyltransferase (Bacillus cytotoxicus (strain DSM 22905 / CIP 110041 / 391-98 / NVH 391-98)).